We begin with the raw amino-acid sequence, 364 residues long: 4-hydroxythreonine-4-phosphate dehydrogenase (364 aa).

Substrate contacts are provided by His148 and Thr149. A divalent metal cation contacts are provided by His177, His216, and His301. 3 residues coordinate substrate: Lys309, Asn318, and Arg327.

Belongs to the PdxA family. Homodimer. Zn(2+) is required as a cofactor. It depends on Mg(2+) as a cofactor. The cofactor is Co(2+).

It localises to the cytoplasm. It carries out the reaction 4-(phosphooxy)-L-threonine + NAD(+) = 3-amino-2-oxopropyl phosphate + CO2 + NADH. It functions in the pathway cofactor biosynthesis; pyridoxine 5'-phosphate biosynthesis; pyridoxine 5'-phosphate from D-erythrose 4-phosphate: step 4/5. Catalyzes the NAD(P)-dependent oxidation of 4-(phosphooxy)-L-threonine (HTP) into 2-amino-3-oxo-4-(phosphooxy)butyric acid which spontaneously decarboxylates to form 3-amino-2-oxopropyl phosphate (AHAP). The protein is 4-hydroxythreonine-4-phosphate dehydrogenase of Campylobacter jejuni (strain RM1221).